Reading from the N-terminus, the 97-residue chain is Exodeoxyribonuclease 7 small subunit (97 aa).

The interval 1 to 22 (MAKTASPGDTAAGNGTEPLPDK) is disordered.

The protein belongs to the XseB family. Heterooligomer composed of large and small subunits.

The protein resides in the cytoplasm. The enzyme catalyses Exonucleolytic cleavage in either 5'- to 3'- or 3'- to 5'-direction to yield nucleoside 5'-phosphates.. Functionally, bidirectionally degrades single-stranded DNA into large acid-insoluble oligonucleotides, which are then degraded further into small acid-soluble oligonucleotides. This is Exodeoxyribonuclease 7 small subunit from Burkholderia vietnamiensis (strain G4 / LMG 22486) (Burkholderia cepacia (strain R1808)).